A 1378-amino-acid chain; its full sequence is High molecular weight rhoptry protein 2 (1378 aa).

The N-terminal stretch at 1 to 19 (MIKVTIFLLLSIFSFNLYG) is a signal peptide. Disulfide bonds link cysteine 46-cysteine 71 and cysteine 233-cysteine 240. Residues 739–759 (FVYASYILGLVFFIESHIDIA) form a helical membrane-spanning segment. 3 disulfide bridges follow: cysteine 791–cysteine 851, cysteine 871–cysteine 912, and cysteine 947–cysteine 1034.

In terms of assembly, component of the RhopH complex. RhopH complex is composed of CLAG3.1/CLAG3.2, RhopH2 and RhopH3 with a 1:1:1 subunit stoichiometry. Interacts with CLAG3.1/CLAG3.2.

The protein resides in the host cell membrane. It localises to the parasitophorous vacuole membrane. The protein localises to the host cytoplasm. Its subcellular location is the cytoplasm. It is found in the cytoplasmic vesicle. The protein resides in the secretory vesicle. It localises to the rhoptry. Participates in the formation of new permeability pathways in Plasmodium-infected erythrocytes enabling the uptake of nutrients from the blood plasma. Required for maintaining invasion capacity of merozoites. Required for parasite growth and proliferation. This chain is High molecular weight rhoptry protein 2, found in Plasmodium falciparum (isolate 3D7).